Consider the following 2254-residue polypeptide: Acetyl-CoA carboxylase 1 (2254 aa).

Residues 36–543 enclose the Biotin carboxylation domain; it reads PIHSILIANN…HTGWLDSRIA (508 aa). Positions 189–381 constitute an ATP-grasp domain; sequence NSNLVTIPEE…LPAAQVAVGM (193 aa). 215–272 is a binding site for ATP; it reads CQVVGYPAMIKASWGGGGKGIRKVHNDDEVRALFKQVQGEVPGSPIFIMKVASQSRHL. The Mg(2+) site is built by Glu-338, Glu-352, and Asn-354. The Mn(2+) site is built by Glu-338, Glu-352, and Asn-354. The active site involves Arg-356. Residues 670 to 744 enclose the Biotinyl-binding domain; the sequence is LQNDHDPSKL…QAGELIANLD (75 aa). At Lys-711 the chain carries N6-biotinyllysine. Thr-1031 carries the phosphothreonine modification. Ser-1192 bears the Phosphoserine mark. In terms of domain architecture, CoA carboxyltransferase N-terminal spans 1492–1831; sequence QYKPLGYLDR…YVGGPLPVLA (340 aa). A carboxyltransferase region spans residues 1492–2150; sequence QYKPLGYLDR…ESSLVKNVRE (659 aa). CoA contacts are provided by Arg-1740, Lys-2041, and Arg-2043. One can recognise a CoA carboxyltransferase C-terminal domain in the interval 1835–2150; sequence PPERIVEYVP…ESSLVKNVRE (316 aa).

In terms of assembly, homodimer. The cofactor is biotin. Requires Mg(2+) as cofactor. Mn(2+) is required as a cofactor. As to expression, expressed in roots, trichomes, epidermal leaf cells, siliques, petals, anthers, and seeds.

The protein resides in the cytoplasm. It is found in the cytosol. It carries out the reaction hydrogencarbonate + acetyl-CoA + ATP = malonyl-CoA + ADP + phosphate + H(+). It catalyses the reaction N(6)-biotinyl-L-lysyl-[protein] + hydrogencarbonate + ATP = N(6)-carboxybiotinyl-L-lysyl-[protein] + ADP + phosphate + H(+). It functions in the pathway lipid metabolism; malonyl-CoA biosynthesis; malonyl-CoA from acetyl-CoA: step 1/1. Functionally, multifunctional enzyme that catalyzes the carboxylation of acetyl-CoA, forming malonyl-CoA, which is used in the plastid for fatty acid synthesis and in the cytosol in various biosynthetic pathways including fatty acid elongation. Required for very long chain fatty acids elongation. Necessary for embryo and plant development. Plays a central function in embryo morphogenesis, especially in apical meristem development. Involved in cell proliferation and tissue patterning. May act as a repressor of cytokinin response. The protein is Acetyl-CoA carboxylase 1 (ACC1) of Arabidopsis thaliana (Mouse-ear cress).